A 222-amino-acid polypeptide reads, in one-letter code: 7-cyano-7-deazaguanine synthase (222 aa).

14 to 24 (FSGGQDSTTCL) contacts ATP. Cys190, Cys199, Cys202, and Cys205 together coordinate Zn(2+).

It belongs to the QueC family. Homodimer. Requires Zn(2+) as cofactor.

The enzyme catalyses 7-carboxy-7-deazaguanine + NH4(+) + ATP = 7-cyano-7-deazaguanine + ADP + phosphate + H2O + H(+). It functions in the pathway purine metabolism; 7-cyano-7-deazaguanine biosynthesis. Its function is as follows. Catalyzes the ATP-dependent conversion of 7-carboxy-7-deazaguanine (CDG) to 7-cyano-7-deazaguanine (preQ(0)). The chain is 7-cyano-7-deazaguanine synthase from Staphylococcus aureus (strain bovine RF122 / ET3-1).